A 357-amino-acid chain; its full sequence is Sulfate/thiosulfate import ATP-binding protein CysA (357 aa).

Residues 3 to 237 (ITIQNLNKHF…PENAFVTEFL (235 aa)) form the ABC transporter domain. Residue 35 to 42 (GPSGCGKT) participates in ATP binding.

It belongs to the ABC transporter superfamily. Sulfate/tungstate importer (TC 3.A.1.6) family. The complex is composed of two ATP-binding proteins (CysA), two transmembrane proteins (CysT and CysW) and a solute-binding protein (CysP).

The protein localises to the cell inner membrane. The catalysed reaction is sulfate(out) + ATP + H2O = sulfate(in) + ADP + phosphate + H(+). It carries out the reaction thiosulfate(out) + ATP + H2O = thiosulfate(in) + ADP + phosphate + H(+). Part of the ABC transporter complex CysAWTP involved in sulfate/thiosulfate import. Responsible for energy coupling to the transport system. This chain is Sulfate/thiosulfate import ATP-binding protein CysA, found in Neisseria meningitidis serogroup A / serotype 4A (strain DSM 15465 / Z2491).